A 173-amino-acid polypeptide reads, in one-letter code: Photosystem I assembly protein Ycf3 (173 aa).

3 TPR repeats span residues 35 to 68 (AFAYYRDGMSAQADGEYAEALENYYEALNLEDDP), 72 to 105 (SYILYNIGLIHASNGEHDQALEYYHQALENNPRM), and 120 to 153 (GEKAKETGNSRDANSYFDQAAEYWKQAISLAPNN).

This sequence belongs to the Ycf3 family.

Its subcellular location is the cellular thylakoid membrane. Essential for the assembly of the photosystem I (PSI) complex. May act as a chaperone-like factor to guide the assembly of the PSI subunits. The protein is Photosystem I assembly protein Ycf3 of Trichodesmium erythraeum (strain IMS101).